Reading from the N-terminus, the 121-residue chain is Non-specific lipid-transfer protein 3 (121 aa).

Residues 1-28 (MAGARRTMALVALVAVVAAAVVAERASA) form the signal peptide. 4 cysteine pairs are disulfide-bonded: C32–C80, C42–C57, C58–C103, and C78–C117.

This sequence belongs to the plant LTP family.

Plant non-specific lipid-transfer proteins transfer phospholipids as well as galactolipids across membranes. May play a role in wax or cutin deposition in the cell walls of expanding epidermal cells and certain secretory tissues. May possess an antifungal activity and protect the plant against pathogens. The protein is Non-specific lipid-transfer protein 3 (LTP110-A) of Oryza sativa subsp. indica (Rice).